We begin with the raw amino-acid sequence, 240 residues long: Methylthioribulose-1-phosphate dehydratase (240 aa).

Residue Cys99 coordinates substrate. Positions 116 and 118 each coordinate Zn(2+). The Proton donor/acceptor role is filled by Glu145. His201 serves as a coordination point for Zn(2+).

Belongs to the aldolase class II family. MtnB subfamily. The cofactor is Zn(2+).

The protein localises to the cytoplasm. It carries out the reaction 5-(methylsulfanyl)-D-ribulose 1-phosphate = 5-methylsulfanyl-2,3-dioxopentyl phosphate + H2O. Its pathway is amino-acid biosynthesis; L-methionine biosynthesis via salvage pathway; L-methionine from S-methyl-5-thio-alpha-D-ribose 1-phosphate: step 2/6. Catalyzes the dehydration of methylthioribulose-1-phosphate (MTRu-1-P) into 2,3-diketo-5-methylthiopentyl-1-phosphate (DK-MTP-1-P). This Paracoccidioides brasiliensis (strain Pb03) protein is Methylthioribulose-1-phosphate dehydratase.